A 432-amino-acid polypeptide reads, in one-letter code: Trigger factor (432 aa).

The region spanning 161–246 (EDRVTIDFTG…LKKVEERELP (86 aa)) is the PPIase FKBP-type domain.

This sequence belongs to the FKBP-type PPIase family. Tig subfamily. Homodimer and monomer. In vivo most of the ribosomes are in complex with monomeric TF. Uncomplexed TF, however, is in a monomer-dimer equilibrium with approximately two thirds of TF existing in a dimeric state.

It is found in the cytoplasm. The catalysed reaction is [protein]-peptidylproline (omega=180) = [protein]-peptidylproline (omega=0). Involved in protein export. Acts as a chaperone by maintaining the newly synthesized protein in an open conformation. Functions as a peptidyl-prolyl cis-trans isomerase. The chain is Trigger factor from Shigella dysenteriae serotype 1 (strain Sd197).